Reading from the N-terminus, the 214-residue chain is SH3 domain-binding glutamic acid-rich protein (214 aa).

The SH3-binding motif lies at 61 to 67 (NGIPLPP). Residues 101–214 (PGSKVTKSEE…EEEAGEGEDS (114 aa)) form a disordered region. Residues 129 to 144 (GTEKAEKSGENEAQKE) show a composition bias toward basic and acidic residues. Composition is skewed to acidic residues over residues 162–192 (EGED…EAPE) and 198–214 (EAEE…GEDS).

This sequence belongs to the SH3BGR family.

The sequence is that of SH3 domain-binding glutamic acid-rich protein (Sh3bgr) from Mus musculus (Mouse).